The primary structure comprises 138 residues: Translation initiation factor 2 subunit beta (138 aa).

This sequence belongs to the eIF-2-beta/eIF-5 family. Heterotrimer composed of an alpha, a beta and a gamma chain.

In terms of biological role, eIF-2 functions in the early steps of protein synthesis by forming a ternary complex with GTP and initiator tRNA. In Methanococcus maripaludis (strain C5 / ATCC BAA-1333), this protein is Translation initiation factor 2 subunit beta.